A 102-amino-acid polypeptide reads, in one-letter code: MTLTLAHYLVLGAILFAIGIFGIFLNRRNLIILLMSIELVLLAVNMNFVAFSSWFGDTAGQVFVFFILTVAAAEAAIGLAILVLLFRNLNTINVDELDRLKG.

The next 3 helical transmembrane spans lie at Leu-5–Leu-25, Ile-31–Phe-51, and Val-62–Leu-82.

This sequence belongs to the complex I subunit 4L family. NDH-1 is composed of 14 different subunits. Subunits NuoA, H, J, K, L, M, N constitute the membrane sector of the complex.

It localises to the cell inner membrane. The catalysed reaction is a quinone + NADH + 5 H(+)(in) = a quinol + NAD(+) + 4 H(+)(out). Its function is as follows. NDH-1 shuttles electrons from NADH, via FMN and iron-sulfur (Fe-S) centers, to quinones in the respiratory chain. The immediate electron acceptor for the enzyme in this species is believed to be ubiquinone. Couples the redox reaction to proton translocation (for every two electrons transferred, four hydrogen ions are translocated across the cytoplasmic membrane), and thus conserves the redox energy in a proton gradient. The polypeptide is NADH-quinone oxidoreductase subunit K (Bordetella petrii (strain ATCC BAA-461 / DSM 12804 / CCUG 43448)).